The primary structure comprises 136 residues: Small ribosomal subunit protein uS8c (136 aa).

It belongs to the universal ribosomal protein uS8 family. As to quaternary structure, part of the 30S ribosomal subunit.

It localises to the plastid. The protein resides in the chloroplast. In terms of biological role, one of the primary rRNA binding proteins, it binds directly to 16S rRNA central domain where it helps coordinate assembly of the platform of the 30S subunit. The protein is Small ribosomal subunit protein uS8c (rps8) of Morus indica (Mulberry).